We begin with the raw amino-acid sequence, 166 residues long: Vasopressin-neurophysin 2-copeptin (166 aa).

A signal peptide spans 1–19; that stretch reads MPDATLPACFLGLLALTSA. A disulfide bridge links Cys-20 with Cys-25. The residue at position 28 (Gly-28) is a Glycine amide. Cystine bridges form between Cys-41–Cys-85, Cys-44–Cys-58, Cys-52–Cys-75, Cys-59–Cys-65, Cys-92–Cys-104, Cys-98–Cys-116, and Cys-105–Cys-110. N-linked (GlcNAc...) asparagine glycosylation occurs at Asn-133.

The protein belongs to the vasopressin/oxytocin family. As to quaternary structure, interacts with vasopressin receptors V1bR/AVPR1B (Ki=85 pM), V1aR/AVPR1A (Ki=0.6 nM) and V2R/AVPR2 (Ki=4.9 nM). Interacts with oxytocin receptor (OXTR) (Ki=110 nM). Post-translationally, a shorter neurophysin molecule (32-123) is called neurophysin-I and is derived from the complete protein (called neurophysin III) by proteolytic degradation (in vivo or after extraction).

The protein localises to the secreted. Functionally, neurophysin 2 specifically binds vasopressin. Its function is as follows. Vasopressin has a direct antidiuretic action on the kidney, it also causes vasoconstriction of the peripheral vessels. Acts by binding to vasopressin receptors (V1bR/AVPR1B, V1aR/AVPR1A, and V2R/AVPR2). This Sus scrofa (Pig) protein is Vasopressin-neurophysin 2-copeptin (AVP).